The sequence spans 230 residues: Ion-translocating oxidoreductase complex subunit E (230 aa).

6 consecutive transmembrane segments (helical) span residues 18-38, 39-59, 63-83, 86-106, 125-145, and 182-202; these read ALVQLLGMCPLLAVTSTATNA, LGLGLATTLVLTLTNLTISAL, TPAEIRIPIYVMIIASVVSAV, LINAYAFGLYQSLGIFIPLIV, ALSALDGFSIGMGATGAMFVL, and PFLLAMLPPGAFIGLGLMLAV.

The protein belongs to the NqrDE/RnfAE family. As to quaternary structure, the complex is composed of six subunits: RnfA, RnfB, RnfC, RnfD, RnfE and RnfG.

It localises to the cell inner membrane. In terms of biological role, part of a membrane-bound complex that couples electron transfer with translocation of ions across the membrane. In Citrobacter koseri (strain ATCC BAA-895 / CDC 4225-83 / SGSC4696), this protein is Ion-translocating oxidoreductase complex subunit E.